A 285-amino-acid polypeptide reads, in one-letter code: Pantothenate synthetase (285 aa).

32–39 (MGALHDGH) contacts ATP. His39 acts as the Proton donor in catalysis. (R)-pantoate is bound at residue Gln63. Gln63 contacts beta-alanine. 149 to 152 (GEKD) is an ATP binding site. Gln155 lines the (R)-pantoate pocket. ATP contacts are provided by residues Val178 and 186 to 189 (MSSR).

The protein belongs to the pantothenate synthetase family. In terms of assembly, homodimer.

It localises to the cytoplasm. The catalysed reaction is (R)-pantoate + beta-alanine + ATP = (R)-pantothenate + AMP + diphosphate + H(+). Its pathway is cofactor biosynthesis; (R)-pantothenate biosynthesis; (R)-pantothenate from (R)-pantoate and beta-alanine: step 1/1. Functionally, catalyzes the condensation of pantoate with beta-alanine in an ATP-dependent reaction via a pantoyl-adenylate intermediate. The chain is Pantothenate synthetase from Ruegeria pomeroyi (strain ATCC 700808 / DSM 15171 / DSS-3) (Silicibacter pomeroyi).